The sequence spans 103 residues: Urease subunit beta (103 aa).

The protein belongs to the urease beta subunit family. In terms of assembly, heterotrimer of UreA (gamma), UreB (beta) and UreC (alpha) subunits. Three heterotrimers associate to form the active enzyme.

The protein resides in the cytoplasm. The enzyme catalyses urea + 2 H2O + H(+) = hydrogencarbonate + 2 NH4(+). It functions in the pathway nitrogen metabolism; urea degradation; CO(2) and NH(3) from urea (urease route): step 1/1. This Mycobacterium marinum (strain ATCC BAA-535 / M) protein is Urease subunit beta.